The primary structure comprises 242 residues: Small ribosomal subunit protein eS4 (242 aa).

The region spanning 43–106 (LPLMIIVRDI…GDVYRVLPDE (64 aa)) is the S4 RNA-binding domain.

The protein belongs to the eukaryotic ribosomal protein eS4 family.

In Methanothermobacter thermautotrophicus (strain ATCC 29096 / DSM 1053 / JCM 10044 / NBRC 100330 / Delta H) (Methanobacterium thermoautotrophicum), this protein is Small ribosomal subunit protein eS4 (rps4e).